Here is a 186-residue protein sequence, read N- to C-terminus: C-type lectin 37Da (186 aa).

The first 20 residues, 1–20 (MLKTLVQLFLVVAGFAPGFG), serve as a signal peptide directing secretion. N-linked (GlcNAc...) asparagine glycans are attached at residues asparagine 35 and asparagine 47. In terms of domain architecture, C-type lectin spans 46 to 169 (INESYYVFGQ…CHNHASSLFK (124 aa)). Cysteine 140 and cysteine 160 form a disulfide bridge.

It localises to the secreted. Functionally, galactose-specific lectin that displays calcium-dependent activity. Binds to the surface of hemocytes and enhances hemocyte encapsulation and melanization. This is likely by interacting with carbohydrates on the surface of the hemocytes. Also displays agglutination activity against the Gram-negative bacterium E.coli. In Drosophila melanogaster (Fruit fly), this protein is C-type lectin 37Da.